A 108-amino-acid chain; its full sequence is UPF0102 protein Tpet_0671 (108 aa).

It belongs to the UPF0102 family.

The chain is UPF0102 protein Tpet_0671 from Thermotoga petrophila (strain ATCC BAA-488 / DSM 13995 / JCM 10881 / RKU-1).